The chain runs to 372 residues: tRNA pseudouridine synthase D (372 aa).

Asp85 (nucleophile) is an active-site residue. The TRUD domain occupies 160 to 330 (GFTNYFGYQR…MQGSRRFMWG (171 aa)).

It belongs to the pseudouridine synthase TruD family.

It catalyses the reaction uridine(13) in tRNA = pseudouridine(13) in tRNA. Functionally, responsible for synthesis of pseudouridine from uracil-13 in transfer RNAs. The polypeptide is tRNA pseudouridine synthase D (Campylobacter jejuni subsp. jejuni serotype O:23/36 (strain 81-176)).